A 424-amino-acid polypeptide reads, in one-letter code: Glutamate-1-semialdehyde 2,1-aminomutase (424 aa).

Lys263 carries the N6-(pyridoxal phosphate)lysine modification.

Belongs to the class-III pyridoxal-phosphate-dependent aminotransferase family. HemL subfamily. As to quaternary structure, homodimer. The cofactor is pyridoxal 5'-phosphate.

The protein localises to the cytoplasm. It carries out the reaction (S)-4-amino-5-oxopentanoate = 5-aminolevulinate. The protein operates within porphyrin-containing compound metabolism; protoporphyrin-IX biosynthesis; 5-aminolevulinate from L-glutamyl-tRNA(Glu): step 2/2. The sequence is that of Glutamate-1-semialdehyde 2,1-aminomutase from Campylobacter jejuni subsp. jejuni serotype O:23/36 (strain 81-176).